The primary structure comprises 341 residues: Guanine nucleotide-binding protein subunit beta (341 aa).

WD repeat units lie at residues 54–93 (GHLAKIYAMHWASDSRNLVSASQDGKLIVWDGYTTNKVHA), 96–135 (LRSSWVMTCAYAPSGSYVACGGLDNICSIYSLKTREGNVR), 142–180 (GHTGYLSCCRFLDDNQIVTSSGDMSCALWDIETGQQTTA), 183–222 (GHTGDVMSLSLSPDMRTFVSGACDASAKLWDIRDGMCKQT), 225–264 (GHESDINAITYFPNGYAFATGSDDATCRLFDIRADQEIGM), 269–308 (NIICGITSVAFSKSGRLLLGGYDDFNCNVWDVLRQERAGV), and 311–341 (GHDNRVSCLGVTEDGMAVATGSWDSFLRIWN).

This sequence belongs to the WD repeat G protein beta family. G proteins are composed of 3 units, alpha, beta and gamma. The G protein beta1-gamma2 dimer interacts with calmodulin. Abundantly expressed in gills, gonad and mantle and at lower levels in digestion gland. Not detected in muscle.

It is found in the cytoplasm. Its function is as follows. Guanine nucleotide-binding proteins (G proteins) are involved as a modulator or transducer in various transmembrane signaling systems. The beta and gamma chains are required for the GTPase activity, for replacement of GDP by GTP, and for G protein-effector interaction. The protein is Guanine nucleotide-binding protein subunit beta of Pinctada fucata (Akoya pearl oyster).